The chain runs to 196 residues: Nucleoside triphosphate pyrophosphatase (196 aa).

D73 serves as the catalytic Proton acceptor.

The protein belongs to the Maf family. A divalent metal cation is required as a cofactor.

It localises to the cytoplasm. The catalysed reaction is a ribonucleoside 5'-triphosphate + H2O = a ribonucleoside 5'-phosphate + diphosphate + H(+). The enzyme catalyses a 2'-deoxyribonucleoside 5'-triphosphate + H2O = a 2'-deoxyribonucleoside 5'-phosphate + diphosphate + H(+). Nucleoside triphosphate pyrophosphatase. May have a dual role in cell division arrest and in preventing the incorporation of modified nucleotides into cellular nucleic acids. In Chlamydia pneumoniae (Chlamydophila pneumoniae), this protein is Nucleoside triphosphate pyrophosphatase.